A 234-amino-acid chain; its full sequence is Transcriptional regulatory protein CitB (234 aa).

The region spanning 5-121 (TTLIVEDEPM…RLQHTLERFA (117 aa)) is the Response regulatory domain. At Asp-56 the chain carries 4-aspartylphosphate. The segment at residues 181-200 (ADSLARILGSSKTTARRYLE) is a DNA-binding region (H-T-H motif).

In vitro CitB and the CitA kinase domain form a complex, formation of which is enhanced by ATP. Phosphorylated by CitA.

Its subcellular location is the cytoplasm. Member of the two-component regulatory system CitA/CitB essential for expression of citrate-specific fermentation genes. Phosphorylated CitB binds to two sites in the citS-citC intergenic region where it probably activates transcription of both genes. The protein is Transcriptional regulatory protein CitB (citB) of Klebsiella pneumoniae.